Consider the following 892-residue polypeptide: Translation initiation factor IF-2 (892 aa).

A disordered region spans residues 66–305 (TRSTLNIPGT…SLQQGFQKPA (240 aa)). A compositionally biased stretch (polar residues) spans 68–82 (STLNIPGTGGKSKSV). 2 stretches are compositionally biased toward basic and acidic residues: residues 93–159 (VKRD…KDKV) and 166–216 (DMTK…EENK). A compositionally biased stretch (basic residues) spans 254-269 (GRGRNAKAARPAKKGK). Basic and acidic residues predominate over residues 270-282 (HAESKADREEARA). The tr-type G domain occupies 391-560 (PRAPVVTIMG…LLQAEVLELK (170 aa)). Positions 400-407 (GHVDHGKT) are G1. GTP is bound at residue 400–407 (GHVDHGKT). Residues 425 to 429 (GITQH) are G2. Residues 446-449 (DTPG) form a G3 region. GTP contacts are provided by residues 446–450 (DTPGH) and 500–503 (NKID). A G4 region spans residues 500–503 (NKID). Residues 536-538 (SAK) form a G5 region.

It belongs to the TRAFAC class translation factor GTPase superfamily. Classic translation factor GTPase family. IF-2 subfamily.

The protein resides in the cytoplasm. In terms of biological role, one of the essential components for the initiation of protein synthesis. Protects formylmethionyl-tRNA from spontaneous hydrolysis and promotes its binding to the 30S ribosomal subunits. Also involved in the hydrolysis of GTP during the formation of the 70S ribosomal complex. The chain is Translation initiation factor IF-2 from Salmonella typhi.